Here is a 530-residue protein sequence, read N- to C-terminus: Membrane-associated transporter protein (530 aa).

Topologically, residues 1-45 (MSGSNGPTDTHTYQSLAEDCPFGSVEQPKRSTGRLVMHSMAMFGR) are cytoplasmic. Residues 46-66 (EFCYAVEAAYVTPVLLSVGLP) form a helical membrane-spanning segment. The Extracellular portion of the chain corresponds to 67–68 (KS). A helical membrane pass occupies residues 69-89 (LYSMVWLLSPILGFLLQPVVG). Residues 90–105 (SASDHCRARWGRRRPY) are Cytoplasmic-facing. A helical transmembrane segment spans residues 106-126 (ILTLAIMMLLGMALYLNGDAV). Residues 127–138 (VSALVANPRQKL) are Extracellular-facing. A helical membrane pass occupies residues 139–159 (IWAISITMVGVVLFDFSADFI). The Cytoplasmic portion of the chain corresponds to 160-184 (DGPIKAYLFDVCSHQDKEKGLHYHA). Residues 185-205 (LFTGFGGALGYILGAIDWVHL) form a helical membrane-spanning segment. At 206–216 (DLGRLLGTEFQ) the chain is on the extracellular side. A helical transmembrane segment spans residues 217 to 237 (VMFFFSALVLILCFITHLCSI). The Cytoplasmic segment spans residues 238–318 (PEAPLRDAAT…ALVNMPSHYR (81 aa)). The segment at 275–299 (KNGGADTEQPVQEWKNKKPSGQSQR) is disordered. The chain crosses the membrane as a helical span at residues 319 to 339 (CLCVSHLIGWTAFLSNMLFFT). Residues 340–366 (DFMGQIVYHGDPYGAHNSTEFLIYERG) are Extracellular-facing. N-linked (GlcNAc...) asparagine glycosylation occurs at Asn356. Residues 367-387 (VEVGCWGLCINSVFSSVYSYF) traverse the membrane as a helical segment. Topologically, residues 388–398 (QKAMVSYIGLK) are cytoplasmic. The helical transmembrane segment at 399–419 (GLYFMGYLLFGLGTGFIGLFP) threads the bilayer. At 420-425 (NVYSTL) the chain is on the extracellular side. The chain crosses the membrane as a helical span at residues 426–446 (VLCSMFGVMSSTLYTVPFNLI). Residues 447-477 (AEYHREEEKEKGQEAPGGPDNQGRGKGVDCA) are Cytoplasmic-facing. Residues 478-498 (ALTCMVQLAQILVGGGLGFLV) form a helical membrane-spanning segment. At 499–504 (NMAGSV) the chain is on the extracellular side. The chain crosses the membrane as a helical span at residues 505 to 525 (VVVVITASAVSLIGCCFVALF). The Cytoplasmic segment spans residues 526–530 (VRYVD).

Belongs to the glycoside-pentoside-hexuronide (GPH) cation symporter transporter (TC 2.A.2) family. As to quaternary structure, interacts with TYRP1. Mainly expressed in eyeballs and skin melanocytes. Also detected in kidney, colon, gall bladder and pancreas.

It is found in the melanosome membrane. It carries out the reaction sucrose(out) + H(+)(out) = sucrose(in) + H(+)(in). The enzyme catalyses D-glucose(out) + H(+)(out) = D-glucose(in) + H(+)(in). Functionally, proton-associated glucose and sucrose transporter. May be able to transport also fructose. Expressed at a late melanosome maturation stage where functions as a proton/glucose exporter which increase lumenal pH by decreasing glycolysis. Regulates melanogenesis by maintaining melanosome neutralization that is initially initiated by transient OCA2 and required for a proper function of the tyrosinase TYR. The chain is Membrane-associated transporter protein (Slc45a2) from Mus musculus (Mouse).